The primary structure comprises 142 residues: Transcriptional regulator MraZ (142 aa).

SpoVT-AbrB domains follow at residues 5–47 (EYQH…PLDE) and 76–119 (ACEV…SKEK).

This sequence belongs to the MraZ family. In terms of assembly, forms oligomers.

It localises to the cytoplasm. The protein localises to the nucleoid. The sequence is that of Transcriptional regulator MraZ from Clostridium beijerinckii (strain ATCC 51743 / NCIMB 8052) (Clostridium acetobutylicum).